Here is a 467-residue protein sequence, read N- to C-terminus: Cysteine--tRNA ligase (467 aa).

Residue Cys-28 participates in Zn(2+) binding. The 'HIGH' region signature appears at 30–40 (MTVYDHCHLGH). Cys-209, His-234, and Glu-238 together coordinate Zn(2+). A 'KMSKS' region motif is present at residues 266–270 (KMSKS). Lys-269 lines the ATP pocket.

It belongs to the class-I aminoacyl-tRNA synthetase family. In terms of assembly, monomer. Requires Zn(2+) as cofactor.

The protein resides in the cytoplasm. It carries out the reaction tRNA(Cys) + L-cysteine + ATP = L-cysteinyl-tRNA(Cys) + AMP + diphosphate. The chain is Cysteine--tRNA ligase from Nitrosomonas eutropha (strain DSM 101675 / C91 / Nm57).